A 1529-amino-acid chain; its full sequence is ABC multidrug transporter AFR2 (1529 aa).

Gly residues predominate over residues 1-10 (MAFAGVGQGL). The tract at residues 1 to 21 (MAFAGVGQGLGTYDRTEQTSG) is disordered. The 251-residue stretch at 144-394 (GALRDLISNR…FVDMGFHCPS (251 aa)) folds into the ABC transporter 1 domain. 2 N-linked (GlcNAc...) asparagine glycosylation sites follow: asparagine 235 and asparagine 318. 5 helical membrane-spanning segments follow: residues 505-525 (LTLT…SVFY), 539-559 (ALLF…ILIL), 589-609 (IPYK…MTNL), 614-634 (GPYF…SMLF), and 648-668 (LAPA…AVNV). A glycan (N-linked (GlcNAc...) asparagine) is linked at asparagine 742. The helical transmembrane segment at 757 to 777 (GILIGFFLFFTAIYMTATEFI) threads the bilayer. In terms of domain architecture, ABC transporter 2 spans 845-1087 (FSWKDVVYDI…ILIDYFEKNG (243 aa)). ATP is bound at residue 881 to 888 (GVSGAGKT). Transmembrane regions (helical) follow at residues 1193-1213 (YIWS…FSFF), 1227-1247 (FSVF…MPNF), 1268-1288 (IFIL…GAVI), 1314-1334 (LMFL…IMIV), and 1353-1373 (MCLI…FWMF). N-linked (GlcNAc...) asparagine glycosylation is present at asparagine 1434. Residues 1465–1485 (FGLLWAYVVFNIIAAVGIYWL) form a helical membrane-spanning segment. The segment at 1493-1529 (GKEQASEPEGVQEKLVPAQSSEKKRESVSRGSESTAA) is disordered.

The protein belongs to the ABC transporter superfamily. ABCG family. PDR (TC 3.A.1.205) subfamily.

It localises to the cell membrane. It catalyses the reaction itraconazole(in) + ATP + H2O = itraconazole(out) + ADP + phosphate + H(+). It carries out the reaction voriconazole(in) + ATP + H2O = voriconazole(out) + ADP + phosphate + H(+). The enzyme catalyses fluconazole(in) + ATP + H2O = fluconazole(out) + ADP + phosphate + H(+). Its function is as follows. Pleiotropic ABC efflux transporter that confers resistance to structurally and functionally unrelated compounds including azoles such as fluconazole (FLC), itraconazole (ITC), posaconazole (POS), and voriconazole (VRC). The chain is ABC multidrug transporter AFR2 from Cryptococcus neoformans var. grubii serotype A (strain H99 / ATCC 208821 / CBS 10515 / FGSC 9487) (Filobasidiella neoformans var. grubii).